A 127-amino-acid polypeptide reads, in one-letter code: Large ribosomal subunit protein bL12 (127 aa).

Belongs to the bacterial ribosomal protein bL12 family. In terms of assembly, homodimer. Part of the ribosomal stalk of the 50S ribosomal subunit. Forms a multimeric L10(L12)X complex, where L10 forms an elongated spine to which 2 to 4 L12 dimers bind in a sequential fashion. Binds GTP-bound translation factors.

Functionally, forms part of the ribosomal stalk which helps the ribosome interact with GTP-bound translation factors. Is thus essential for accurate translation. The protein is Large ribosomal subunit protein bL12 of Streptomyces virginiae (Streptomyces cinnamonensis).